The following is a 154-amino-acid chain: Nucleoside diphosphate kinase A1 (154 aa).

Residues lysine 13, phenylalanine 61, arginine 89, threonine 95, arginine 106, and asparagine 116 each contribute to the ATP site. The Pros-phosphohistidine intermediate role is filled by histidine 119.

It belongs to the NDK family. Mg(2+) is required as a cofactor.

Its subcellular location is the cytoplasm. It carries out the reaction a 2'-deoxyribonucleoside 5'-diphosphate + ATP = a 2'-deoxyribonucleoside 5'-triphosphate + ADP. The catalysed reaction is a ribonucleoside 5'-diphosphate + ATP = a ribonucleoside 5'-triphosphate + ADP. Major role in the synthesis of nucleoside triphosphates other than ATP. The ATP gamma phosphate is transferred to the NDP beta phosphate via a ping-pong mechanism, using a phosphorylated active-site intermediate. This is Nucleoside diphosphate kinase A1 from Xenopus laevis (African clawed frog).